Here is a 492-residue protein sequence, read N- to C-terminus: Fibroblast growth factor receptor substrate 3 (492 aa).

A lipid anchor (N-myristoyl glycine) is attached at Gly2. In terms of domain architecture, IRS-type PTB spans 13-115 (VPHNHPTKFK…QCNSINVTEE (103 aa)). Disordered regions lie at residues 125 to 205 (PQEL…EDRR), 337 to 413 (QQLR…EPPR), and 425 to 492 (WGTA…DLPL). Polar residues-rich tracts occupy residues 133 to 147 (GSSQPTGYTVSSFSN) and 166 to 185 (PSTSSLRHPSPGEESTQTLI). The span at 374-385 (TSTRASARSHSS) shows a compositional bias: low complexity.

In terms of assembly, binds NTRK1, FGFR1, NGFR, GRB2, PTPN11 and ERK2. In terms of processing, phosphorylated on tyrosine residues upon stimulation by BFGF or NGFB.

It localises to the membrane. Its function is as follows. Adapter protein that links FGF and NGF receptors to downstream signaling pathways. Involved in the activation of MAP kinases. Down-regulates ERK2 signaling by interfering with the phosphorylation and nuclear translocation of ERK2. This chain is Fibroblast growth factor receptor substrate 3 (Frs3), found in Rattus norvegicus (Rat).